Reading from the N-terminus, the 443-residue chain is MEEDIDTRKINNSFLRDHSYATEADIISTVEFNHTGELLATGDKGGRVVIFQREQESKNQVHRRGEYNVYSTFQSHEPEFDYLKSLEIEEKINKIRWLPQQNAAYFLLSTNDKTVKLWKVSERDKRPEGYNLKDEEGRLRDPATITTLRVPVLRPMDLMVEATPRRVFANAHTYHINSISVNSDYETYMSADDLRINLWNFEITNQSFNIVDIKPANMEELTEVITAAEFHPHHCNTFVYSSSKGTIRLCDMRASALCDRHTKFFEEPEDPSNRSFFSEIISSISDVKFSHSGRYIMTRDYLTVKVWDLNMENRPIETYQVHDYLRSKLCSLYENDCIFDKFECVWNGSDSVIMTGSYNNFFRMFDRNTKRDVTLEASRENSKPRAILKPRKVCVGGKRRKDEISVDSLDFSKKILHTAWHPSENIIAVAATNNLYIFQDKVN.

WD repeat units lie at residues Thr-22–Val-61, Glu-87–Glu-128, Ala-171–Asn-209, and Glu-220–Arg-260. Ser-275 is subject to Phosphoserine. WD repeat units lie at residues Glu-279–Glu-317, Glu-334–Leu-375, and Asp-410–Val-442. A Phosphotyrosine modification is found at Tyr-295. Position 298 is a phosphothreonine (Thr-298).

This sequence belongs to the phosphatase 2A regulatory subunit B family. As to quaternary structure, PP2A consists of a common heterodimeric core enzyme, composed of a 36 kDa catalytic subunit (subunit C) and a 65 kDa constant regulatory subunit (PR65 or subunit A), that associates with a variety of regulatory subunits. Proteins that associate with the core dimer include three families of regulatory subunits B (the R2/B/PR55/B55, R3/B''/PR72/PR130/PR59 and R5/B'/B56 families), the 48 kDa variable regulatory subunit, viral proteins, and cell signaling molecules. Interacts with TOMM22. Interacts with IER5 (via N- and C-terminal regions).

The protein resides in the cytoplasm. The protein localises to the cytoskeleton. Its subcellular location is the membrane. The B regulatory subunit might modulate substrate selectivity and catalytic activity, and might also direct the localization of the catalytic enzyme to a particular subcellular compartment. The polypeptide is Serine/threonine-protein phosphatase 2A 55 kDa regulatory subunit B beta isoform (PPP2R2B) (Bos taurus (Bovine)).